The chain runs to 464 residues: ATP-dependent protease ATPase subunit HslU (464 aa).

ATP contacts are provided by residues Ile-19, 61–66, Asp-277, Glu-342, and Arg-414; that span reads GVGKTE.

The protein belongs to the ClpX chaperone family. HslU subfamily. In terms of assembly, a double ring-shaped homohexamer of HslV is capped on each side by a ring-shaped HslU homohexamer. The assembly of the HslU/HslV complex is dependent on binding of ATP.

It localises to the cytoplasm. In terms of biological role, ATPase subunit of a proteasome-like degradation complex; this subunit has chaperone activity. The binding of ATP and its subsequent hydrolysis by HslU are essential for unfolding of protein substrates subsequently hydrolyzed by HslV. HslU recognizes the N-terminal part of its protein substrates and unfolds these before they are guided to HslV for hydrolysis. The protein is ATP-dependent protease ATPase subunit HslU of Lactobacillus johnsonii (strain CNCM I-12250 / La1 / NCC 533).